The primary structure comprises 432 residues: Adenylosuccinate synthetase (432 aa).

Residues 12–18 (GDEGKGK) and 40–42 (GHT) contribute to the GTP site. Aspartate 13 (proton acceptor) is an active-site residue. Mg(2+) is bound by residues aspartate 13 and glycine 40. Residues 13-16 (DEGK), 38-41 (NAGH), threonine 130, arginine 144, glutamine 225, threonine 240, and arginine 304 contribute to the IMP site. The active-site Proton donor is the histidine 41. A substrate-binding site is contributed by 300 to 306 (ATTGRPR). Residues arginine 306, 332–334 (KLD), and 414–416 (SVG) each bind GTP.

This sequence belongs to the adenylosuccinate synthetase family. As to quaternary structure, homodimer. Mg(2+) is required as a cofactor.

It is found in the cytoplasm. It catalyses the reaction IMP + L-aspartate + GTP = N(6)-(1,2-dicarboxyethyl)-AMP + GDP + phosphate + 2 H(+). The protein operates within purine metabolism; AMP biosynthesis via de novo pathway; AMP from IMP: step 1/2. In terms of biological role, plays an important role in the de novo pathway of purine nucleotide biosynthesis. Catalyzes the first committed step in the biosynthesis of AMP from IMP. The polypeptide is Adenylosuccinate synthetase (Anaeromyxobacter dehalogenans (strain 2CP-C)).